The sequence spans 192 residues: MAARDPEATKARIFEAAVAEFARHGIAGARIDRIAAEARANKQLIYAYYGNKGELFASVLEKKMLDLAISVPVDPDDIEGWIDRLLDYHAAHPELLRLLFWEGMEYGTAELPHEAERQEHYARKVAAVRDGQERGVITDAIPAPDLLFLLVAMANWAVVVPQMKRILVGGGDAGTDGLRDSIKKAARRIVDR.

Residues 7–67 form the HTH tetR-type domain; it reads EATKARIFEA…SVLEKKMLDL (61 aa). The segment at residues 30-49 is a DNA-binding region (H-T-H motif); it reads RIDRIAAEARANKQLIYAYY.

Homodimer. Four dimers bind to the two operator sites.

With respect to regulation, binding of a wide range of cationic hydrophobic compounds to SCO4008 causes a decrease in DNA-binding, probably via allosteric conformational change of SCO4008. Probably regulates the expression of its own gene and the adjacent SCO4007 gene by binding to two operator sites in the SCO4007-SCO4008 intergenic region. This chain is HTH-type transcriptional repressor SCO4008, found in Streptomyces coelicolor (strain ATCC BAA-471 / A3(2) / M145).